Consider the following 553-residue polypeptide: MEKSIESISSSTLNILDNKNYKKWDNETVCKWLLNNIKTIQKVSIEIFQANEIIGKDLEFLTDKILLKMGVGIRDILNFKFEYQILKNCYNNNNNNNHITINNFNYNFNNFKININKDLLKVVVNAPIININEYQYIETISKNKFCEIEKYKKSQTKVNEYIIIKKIIKNSTLNEEKLINEIDTIYLLDHPNLIKIIGYCKDKNYFYIGMKYYETFKFKQSNISKFGKNFEQVIRKISFKILSAIDYLHSLEPPIIHGNINAKNILLDNENNEPILIDFGLSYKSIDLLTNQKTQFISPCFITPEYFYKKTKNKISKEADIFSFGSTISNMIKGGTDFKEDEEGFEELKRTFAGVLTSRDKVSFDYRSLFTEINKDEPCFRPSSKELLKSFWFVEPPQPSFKTSEITTNLLIYYLKKYGCYIIRDGVAMVSLNFNENIYSTSSIIGSEFSHQPKINEKHKYFKEINQFYSKILSESFQAKIGWYLLNLNNEFKDKPYFKNIFLSFSTSDKLEINSVADLNLKLTIFFYNSITMSLIYQTIYQKPKSFKIVDYL.

The region spanning 24–90 (WDNETVCKWL…FEYQILKNCY (67 aa)) is the SAM domain. A Protein kinase domain is found at 134 to 393 (YQYIETISKN…SKELLKSFWF (260 aa)). ATP is bound by residues 140–148 (ISKNKFCEI) and K165.

The protein belongs to the protein kinase superfamily. Ser/Thr protein kinase family.

The chain is Probable inactive serine/threonine-protein kinase samkD (samkD) from Dictyostelium discoideum (Social amoeba).